The primary structure comprises 302 residues: DNA-directed RNA polymerase II subunit rpb3 (302 aa).

The protein belongs to the archaeal Rpo3/eukaryotic RPB3 RNA polymerase subunit family. As to quaternary structure, component of the RNA polymerase II (Pol II) complex consisting of 12 subunits.

The protein localises to the nucleus. In terms of biological role, DNA-dependent RNA polymerase catalyzes the transcription of DNA into RNA using the four ribonucleoside triphosphates as substrates. Component of RNA polymerase II which synthesizes mRNA precursors and many functional non-coding RNAs. Pol II is the central component of the basal RNA polymerase II transcription machinery. It is composed of mobile elements that move relative to each other. Rpb3 is part of the core element with the central large cleft and the clamp element that moves to open and close the cleft. The sequence is that of DNA-directed RNA polymerase II subunit rpb3 (polr2c) from Dictyostelium discoideum (Social amoeba).